A 317-amino-acid polypeptide reads, in one-letter code: L-lactate dehydrogenase (317 aa).

Residues V17, D38, K43, Y69, and 83 to 84 contribute to the NAD(+) site; that span reads GA. Substrate-binding residues include Q86 and R92. NAD(+) contacts are provided by residues S105, 122–124, and S147; that span reads ATN. Residue 124–127 participates in substrate binding; it reads NPVD. 152–155 contributes to the substrate binding site; it reads DTAR. Residues R157 and H172 each coordinate beta-D-fructose 1,6-bisphosphate. H179 (proton acceptor) is an active-site residue. Y224 carries the phosphotyrosine modification. T233 serves as a coordination point for substrate.

Belongs to the LDH/MDH superfamily. LDH family. Homotetramer.

It is found in the cytoplasm. It catalyses the reaction (S)-lactate + NAD(+) = pyruvate + NADH + H(+). It participates in fermentation; pyruvate fermentation to lactate; (S)-lactate from pyruvate: step 1/1. Allosterically activated by fructose 1,6-bisphosphate (FBP). In terms of biological role, catalyzes the conversion of lactate to pyruvate. In Bacillus caldolyticus, this protein is L-lactate dehydrogenase.